Here is a 122-residue protein sequence, read N- to C-terminus: Large ribosomal subunit protein uL14 (122 aa).

It belongs to the universal ribosomal protein uL14 family. In terms of assembly, part of the 50S ribosomal subunit. Forms a cluster with proteins L3 and L19. In the 70S ribosome, L14 and L19 interact and together make contacts with the 16S rRNA in bridges B5 and B8.

Its function is as follows. Binds to 23S rRNA. Forms part of two intersubunit bridges in the 70S ribosome. The chain is Large ribosomal subunit protein uL14 from Paraburkholderia phytofirmans (strain DSM 17436 / LMG 22146 / PsJN) (Burkholderia phytofirmans).